Consider the following 348-residue polypeptide: Histidinol-phosphate aminotransferase (348 aa).

Lysine 207 bears the N6-(pyridoxal phosphate)lysine mark.

Belongs to the class-II pyridoxal-phosphate-dependent aminotransferase family. Histidinol-phosphate aminotransferase subfamily. In terms of assembly, homodimer. Pyridoxal 5'-phosphate serves as cofactor.

It catalyses the reaction L-histidinol phosphate + 2-oxoglutarate = 3-(imidazol-4-yl)-2-oxopropyl phosphate + L-glutamate. It participates in amino-acid biosynthesis; L-histidine biosynthesis; L-histidine from 5-phospho-alpha-D-ribose 1-diphosphate: step 7/9. This chain is Histidinol-phosphate aminotransferase, found in Rippkaea orientalis (strain PCC 8801 / RF-1) (Cyanothece sp. (strain PCC 8801)).